A 514-amino-acid polypeptide reads, in one-letter code: Ribonuclease Y (514 aa).

The chain crosses the membrane as a helical span at residues 3-23 (YMIIYEIIAGILIVVAILIHF). Positions 204–289 (TVHVVTLPND…EMVEKAEKEL (86 aa)) constitute a KH domain. An HD domain is found at 330 to 423 (VLKHSVEVAY…VQAADAISAA (94 aa)).

It belongs to the RNase Y family.

Its subcellular location is the cell membrane. Endoribonuclease that initiates mRNA decay. In Clostridium kluyveri (strain ATCC 8527 / DSM 555 / NBRC 12016 / NCIMB 10680 / K1), this protein is Ribonuclease Y.